We begin with the raw amino-acid sequence, 1446 residues long: DNA-directed RNA polymerase subunit beta'' (1446 aa).

The Zn(2+) site is built by cysteine 217, cysteine 285, cysteine 292, and cysteine 295.

Belongs to the RNA polymerase beta' chain family. RpoC2 subfamily. In terms of assembly, in plastids the minimal PEP RNA polymerase catalytic core is composed of four subunits: alpha, beta, beta', and beta''. When a (nuclear-encoded) sigma factor is associated with the core the holoenzyme is formed, which can initiate transcription. It depends on Zn(2+) as a cofactor.

The protein resides in the plastid. It is found in the chloroplast. The enzyme catalyses RNA(n) + a ribonucleoside 5'-triphosphate = RNA(n+1) + diphosphate. Functionally, DNA-dependent RNA polymerase catalyzes the transcription of DNA into RNA using the four ribonucleoside triphosphates as substrates. This Thalassiosira pseudonana (Marine diatom) protein is DNA-directed RNA polymerase subunit beta''.